Here is a 145-residue protein sequence, read N- to C-terminus: D-aminoacyl-tRNA deacylase (145 aa).

The Gly-cisPro motif, important for rejection of L-amino acids signature appears at 137 to 138; the sequence is GP.

This sequence belongs to the DTD family. Homodimer.

It is found in the cytoplasm. It catalyses the reaction glycyl-tRNA(Ala) + H2O = tRNA(Ala) + glycine + H(+). It carries out the reaction a D-aminoacyl-tRNA + H2O = a tRNA + a D-alpha-amino acid + H(+). Its function is as follows. An aminoacyl-tRNA editing enzyme that deacylates mischarged D-aminoacyl-tRNAs. Also deacylates mischarged glycyl-tRNA(Ala), protecting cells against glycine mischarging by AlaRS. Acts via tRNA-based rather than protein-based catalysis; rejects L-amino acids rather than detecting D-amino acids in the active site. By recycling D-aminoacyl-tRNA to D-amino acids and free tRNA molecules, this enzyme counteracts the toxicity associated with the formation of D-aminoacyl-tRNA entities in vivo and helps enforce protein L-homochirality. In Salmonella paratyphi C (strain RKS4594), this protein is D-aminoacyl-tRNA deacylase.